We begin with the raw amino-acid sequence, 1225 residues long: uncharacterized protein (1225 aa).

The span at 1–15 (MSSQAEPSKGASNAD) shows a compositional bias: polar residues. A disordered region spans residues 1–104 (MSSQAEPSKG…VDGVPTRPVS (104 aa)). A compositionally biased stretch (basic and acidic residues) spans 16 to 25 (PNEKVEKMHL). The span at 43-65 (ASPSDKNNLNPQSAGVSEVQVQD) shows a compositional bias: polar residues. Residues 167–187 (FLFGYLRFGFLSLFIIMAVCI) traverse the membrane as a helical segment. The region spanning 217–422 (DSETVTWLNT…SPNVYELDIE (206 aa)) is the SMP-LTD domain. C2 domains lie at 413-534 (SPNV…NDAF), 559-668 (DSGE…LLWF), and 685-803 (KPAQ…GALM). S843 is modified (phosphoserine). The disordered stretch occupies residues 867 to 890 (PESQKTPTAVDNTSTSRGSTSVKT). Over residues 869–890 (SQKTPTAVDNTSTSRGSTSVKT) the composition is skewed to polar residues. Residues 1019-1137 (RLTPVPVKLE…QQQQQTNYEI (119 aa)) enclose the C2 4 domain. Residues D1053, D1059, D1107, D1109, and D1115 each coordinate Ca(2+).

Ca(2+) serves as cofactor.

It is found in the endoplasmic reticulum membrane. This is an uncharacterized protein from Schizosaccharomyces pombe (strain 972 / ATCC 24843) (Fission yeast).